A 456-amino-acid polypeptide reads, in one-letter code: 5-hydroxytryptamine receptor 3E (456 aa).

The signal sequence occupies residues 1-25 (MEGSWFHRKRFSFYLLLGFLLQGRG). Over 26–248 (VTFTINCSGF…FYVAIRRRPS (223 aa)) the chain is Extracellular. C162 and C176 form a disulfide bridge. An N-linked (GlcNAc...) asparagine glycan is attached at N175. A helical membrane pass occupies residues 249–269 (LYVINLLVPSGFLVAIDALSF). Topologically, residues 270–282 (YLPVKSGNRVPFK) are cytoplasmic. A helical membrane pass occupies residues 283–303 (ITLLLGYNVFLLMMSDLLPTS). The Extracellular segment spans residues 304-307 (GTPL). A helical membrane pass occupies residues 308–328 (IGVYFALCLSLMVGSLLETIF). Residues 329–433 (ITHLLHVATT…WLQFSHAMDA (105 aa)) lie on the Cytoplasmic side of the membrane. The segment at 401–432 (TGGSEWTRAQREHEAQKQHSVELWLQFSHAMD) is HA-stretch; determines single-channel conductance in 5-HT3 receptors. Residues 434-454 (MLFRLYLLFMASSIITVICLW) form a helical membrane-spanning segment. The Extracellular portion of the chain corresponds to 455–456 (NT).

It belongs to the ligand-gated ion channel (TC 1.A.9) family. 5-hydroxytryptamine receptor (TC 1.A.9.2) subfamily. HTR3E sub-subfamily. As to quaternary structure, forms homopentameric as well as heteropentameric serotonin-activated cation-selective channel complexes with HTR3A. The homomeric complex is not functional. Heteropentameric complexes display properties which resemble that of neuronal serotonin-activated channels in vivo. As to expression, expressed in adult colon and intestine.

It is found in the postsynaptic cell membrane. It localises to the cell membrane. The catalysed reaction is Na(+)(in) = Na(+)(out). It catalyses the reaction K(+)(in) = K(+)(out). The enzyme catalyses Ca(2+)(in) = Ca(2+)(out). Its function is as follows. Forms serotonin (5-hydroxytryptamine/5-HT3)-activated cation-selective channel complexes, which when activated cause fast, depolarizing responses in neurons. The sequence is that of 5-hydroxytryptamine receptor 3E from Homo sapiens (Human).